The sequence spans 307 residues: tRNA pseudouridine synthase B (307 aa).

Asp45 functions as the Nucleophile in the catalytic mechanism.

Belongs to the pseudouridine synthase TruB family. Type 1 subfamily.

The enzyme catalyses uridine(55) in tRNA = pseudouridine(55) in tRNA. In terms of biological role, responsible for synthesis of pseudouridine from uracil-55 in the psi GC loop of transfer RNAs. The chain is tRNA pseudouridine synthase B from Heliobacterium mobile (Heliobacillus mobilis).